The primary structure comprises 316 residues: TATA-box-binding protein (316 aa).

Disordered stretches follow at residues 1–21 (MDQN…QGAM) and 104–135 (LTTA…ASES). Low complexity-rich tracts occupy residues 104-115 (LTTAPLPGTTPL) and 123-133 (MTPITPATPAS). 2 tandem repeats follow at residues 142–218 (LQNI…ARVV) and 232–309 (IQNM…YPIL). The DNA site is built by Asn144, Arg180, Lys195, Asn234, and Arg271.

Belongs to the TBP family. In terms of assembly, binds DNA as monomer. Belongs to the TFIID complex together with the TBP-associated factors (TAFs). Part of a TFIID-containing RNA polymerase II pre-initiation complex that is composed of TBP and at least GTF2A1, GTF2A2, GTF2E1, GTF2E2, GTF2F1, GTF2H2, GTF2H3, GTF2H4, GTF2H5, GTF2B, TCEA1, ERCC2, ERCC3, TAF1, TAF2, TAF3, TAF4, TAF5, TAF6, TAF7, TAF8, TAF9, TAF10, TAF11, TAF12 and TAF13. Component of the transcription factor SL1/TIF-IB complex, composed of TBP and at least TAF1A, TAF1B, TAF1C and TAF1D. Association of TBP to form either TFIID or SL1/TIF-IB appears to be mutually exclusive. Interacts with TAF1A, TAF1B and TAF1C. Interacts with TFIIB, NCOA6, DRAP1, DR1 and ELF3. Interacts with SPIB, SNAPC1, SNAPC2 and SNAPC4. Interacts with UTF1. Interacts with BRF2; this interaction promotes recruitment of BRF2 to TATA box-containing promoters. Interacts with UBTF. Interacts with GPBP1. Interacts with CITED2. Interacts with ATF7IP. Interacts with LLPH. Interacts with HSF1 (via transactivation domain). Interacts with GTF2B (via C-terminus); this interaction with promoter-bound TBP guides RNA polymerase II into the pre-initiation complex (PIC). Interacts with PAX5. Interacts with MSX1; the interaction may inhibit MSX1 autoinactivation. Interacts with MSX3. In terms of tissue distribution, ubiquitously expressed.

The protein resides in the nucleus. In terms of biological role, general transcription factor that functions at the core of the DNA-binding multiprotein factor TFIID. Binding of TFIID to the TATA box is the initial transcriptional step of the pre-initiation complex (PIC), playing a role in the activation of eukaryotic genes transcribed by RNA polymerase II. Component of a BRF2-containing transcription factor complex that regulates transcription mediated by RNA polymerase III. Component of the transcription factor SL1/TIF-IB complex, which is involved in the assembly of the PIC (pre-initiation complex) during RNA polymerase I-dependent transcription. The rate of PIC formation probably is primarily dependent on the rate of association of SL1 with the rDNA promoter. SL1 is involved in stabilization of nucleolar transcription factor 1/UBTF on rDNA. The protein is TATA-box-binding protein (Tbp) of Mus musculus (Mouse).